Consider the following 275-residue polypeptide: 2,3,4,5-tetrahydropyridine-2,6-dicarboxylate N-succinyltransferase (275 aa).

Residues Arg-104 and Asp-141 each contribute to the substrate site.

Belongs to the transferase hexapeptide repeat family. Homotrimer.

The protein localises to the cytoplasm. It carries out the reaction (S)-2,3,4,5-tetrahydrodipicolinate + succinyl-CoA + H2O = (S)-2-succinylamino-6-oxoheptanedioate + CoA. It functions in the pathway amino-acid biosynthesis; L-lysine biosynthesis via DAP pathway; LL-2,6-diaminopimelate from (S)-tetrahydrodipicolinate (succinylase route): step 1/3. In Tolumonas auensis (strain DSM 9187 / NBRC 110442 / TA 4), this protein is 2,3,4,5-tetrahydropyridine-2,6-dicarboxylate N-succinyltransferase.